The sequence spans 151 residues: RNA polymerase-binding transcription factor DksA (151 aa).

Residues Cys114, Cys117, Cys135, and Cys138 each contribute to the Zn(2+) site. The segment at 114-138 (CNSCAVEIGIRRLEARPTANLCIDC) adopts a dksA C4-type zinc-finger fold.

The protein belongs to the DksA family. As to quaternary structure, interacts directly with the RNA polymerase.

The protein localises to the cytoplasm. Transcription factor that acts by binding directly to the RNA polymerase (RNAP). Required for negative regulation of rRNA expression and positive regulation of several amino acid biosynthesis promoters. Also required for regulation of fis expression. The chain is RNA polymerase-binding transcription factor DksA from Buchnera aphidicola subsp. Schizaphis graminum (strain Sg).